A 190-amino-acid polypeptide reads, in one-letter code: Crossover junction endodeoxyribonuclease RuvC (190 aa).

Active-site residues include Asp-8, Glu-67, and Asp-139. 3 residues coordinate Mg(2+): Asp-8, Glu-67, and Asp-139.

Belongs to the RuvC family. As to quaternary structure, homodimer which binds Holliday junction (HJ) DNA. The HJ becomes 2-fold symmetrical on binding to RuvC with unstacked arms; it has a different conformation from HJ DNA in complex with RuvA. In the full resolvosome a probable DNA-RuvA(4)-RuvB(12)-RuvC(2) complex forms which resolves the HJ. The cofactor is Mg(2+).

It localises to the cytoplasm. The catalysed reaction is Endonucleolytic cleavage at a junction such as a reciprocal single-stranded crossover between two homologous DNA duplexes (Holliday junction).. In terms of biological role, the RuvA-RuvB-RuvC complex processes Holliday junction (HJ) DNA during genetic recombination and DNA repair. Endonuclease that resolves HJ intermediates. Cleaves cruciform DNA by making single-stranded nicks across the HJ at symmetrical positions within the homologous arms, yielding a 5'-phosphate and a 3'-hydroxyl group; requires a central core of homology in the junction. The consensus cleavage sequence is 5'-(A/T)TT(C/G)-3'. Cleavage occurs on the 3'-side of the TT dinucleotide at the point of strand exchange. HJ branch migration catalyzed by RuvA-RuvB allows RuvC to scan DNA until it finds its consensus sequence, where it cleaves and resolves the cruciform DNA. The protein is Crossover junction endodeoxyribonuclease RuvC of Haemophilus influenzae (strain 86-028NP).